Consider the following 1074-residue polypeptide: DNA helicase B (1074 aa).

Disordered regions lie at residues 1–38 (MARQ…EEEF), 380–420 (GAKP…HVRS), and 932–1014 (GSCA…FDEE). The span at 20-38 (DDEEEDCAQEEEGEQEEEF) shows a compositional bias: acidic residues. Residues 934–946 (CAPSTGFASQPSS) show a composition bias toward polar residues. S942 and S946 each carry phosphoserine. T992 carries the post-translational modification Phosphothreonine. S1015 and S1026 each carry phosphoserine. The Nuclear export signal motif lies at 1022–1046 (VEAPSPQVSSVFQNMRLNTLTPRQL). The tract at residues 1040–1074 (TLTPRQLFKPTDNQDTGTAGVADDANDPSNQEMEM) is disordered.

This sequence belongs to the RecD family. HELB subfamily. As to quaternary structure, binds to RPA1; this interaction promotes HELB recruitment to chromatin following DNA damage. Interacts with at least two subunits of the DNA polymerase alpha complex. Interacts with CDC45. Interacts with TOPB1. Phosphorylated at Ser-942 by CDK2 during the G1/S transition, resulting in its nuclear export into the cytoplasm. As S phase progresses, its exclusion from the nucleus promotes the activation of long-range resection.

It is found in the nucleus. The protein localises to the cytoplasm. Its subcellular location is the chromosome. The catalysed reaction is ATP + H2O = ADP + phosphate + H(+). Functionally, 5'-3' DNA helicase involved in DNA damage response by acting as an inhibitor of DNA end resection. Recruitment to single-stranded DNA (ssDNA) following DNA damage leads to inhibit the nucleases catalyzing resection, such as EXO1, BLM and DNA2, possibly via the 5'-3' ssDNA translocase activity of HELB. As cells approach S phase, DNA end resection is promoted by the nuclear export of HELB following phosphorylation. Acts independently of TP53BP1. Unwinds duplex DNA with 5'-3' polarity. Has single-strand DNA-dependent ATPase and DNA helicase activities. Prefers ATP and dATP as substrates. During S phase, may facilitate cellular recovery from replication stress. This chain is DNA helicase B, found in Mus musculus (Mouse).